The sequence spans 369 residues: Developmentally-regulated G-protein 3 (369 aa).

The 226-residue stretch at 66–291 folds into the OBG-type G domain; it reads SRVGLVGFPS…LLDKIWEYLD (226 aa). GTP contacts are provided by residues 72 to 79, 118 to 122, and 249 to 252; these read GFPSVGKS, DLPGI, and NKID. One can recognise a TGS domain in the interval 291–367; the sequence is DLTRIYTKPK…EDEDVVQIVK (77 aa).

Belongs to the TRAFAC class OBG-HflX-like GTPase superfamily. OBG GTPase family.

In terms of biological role, binds GDP and GTP, and has low GTPase activity in vitro. The chain is Developmentally-regulated G-protein 3 (DRG3) from Arabidopsis thaliana (Mouse-ear cress).